Here is a 341-residue protein sequence, read N- to C-terminus: Heat-inducible transcription repressor HrcA (341 aa).

The protein belongs to the HrcA family.

Negative regulator of class I heat shock genes (grpE-dnaK-dnaJ and groELS operons). Prevents heat-shock induction of these operons. The protein is Heat-inducible transcription repressor HrcA of Corynebacterium jeikeium (strain K411).